We begin with the raw amino-acid sequence, 437 residues long: Aromatic peroxidase fscJ (437 aa).

The N-terminal stretch at Met1 to Ala19 is a signal peptide. Cys83 contacts heme.

This sequence belongs to the chloroperoxidase family. Heme b serves as cofactor.

It participates in secondary metabolite biosynthesis. In terms of biological role, aromatic peroxidase; part of the fragmented gene cluster that mediates the biosynthesis of fusarochromene, a tryptophan-derived metabolite closely related to a group of mycotoxins including fusarochromanone. The role of fscJ within the pathway has not been identified yet. The first step of the pathway is the epimerization of L-tryptophan to D-tryptophan in the presence of the NRPS-like tryptophan epimerase fscC. D-tryptophan is subsequently hydroxylated by the tryptophan 6-hydroxylase fscE to yield 6-hydroxytryptophan. The pyrrole ring undergoes cleavaged by the tryptophan 2,3-dioxygenase fscD and is finally converted to 4-hydroxykyrunenine by the hydrolase fscH. The NRPS-like oxidoreductase fscA reduces the carboxyl group to primary alcohol and the DMATS-type prenyltransferase fscG performs prenylation, followed by the formation of a chromene ring catalyzed by the oxidoreductase fscI, which leads to desacetylfusarochromene. Epoxidation by fscF and rearrangement reactions of chromene double bonds convert compound desacetylfusarochromene to fusarochromanones. Although specific acetyltransferases were not found near the fsc gene cluster, several predicted enzymes containing the N-acetyltransferase superfamily domain are present in the genome of F.equiseti. These predicted enzymes may have the potential to convert desacetylfusarochromene to fusarochromene. The polypeptide is Aromatic peroxidase fscJ (Fusarium equiseti (Fusarium scirpi)).